Here is a 287-residue protein sequence, read N- to C-terminus: 3-methyl-2-oxobutanoate hydroxymethyltransferase (287 aa).

Polar residues predominate over residues 1 to 19; it reads MSTLPKTLTLDTSTSRANP. The interval 1–24 is disordered; the sequence is MSTLPKTLTLDTSTSRANPTPQPM. 2 residues coordinate Mg(2+): Asp-66 and Asp-105. 3-methyl-2-oxobutanoate-binding positions include 66-67, Asp-105, and Lys-135; that span reads DS. Residue Glu-137 participates in Mg(2+) binding. Glu-204 (proton acceptor) is an active-site residue.

The protein belongs to the PanB family. As to quaternary structure, homodecamer; pentamer of dimers. The cofactor is Mg(2+).

It is found in the cytoplasm. The catalysed reaction is 3-methyl-2-oxobutanoate + (6R)-5,10-methylene-5,6,7,8-tetrahydrofolate + H2O = 2-dehydropantoate + (6S)-5,6,7,8-tetrahydrofolate. The protein operates within cofactor biosynthesis; (R)-pantothenate biosynthesis; (R)-pantoate from 3-methyl-2-oxobutanoate: step 1/2. Functionally, catalyzes the reversible reaction in which hydroxymethyl group from 5,10-methylenetetrahydrofolate is transferred onto alpha-ketoisovalerate to form ketopantoate. The chain is 3-methyl-2-oxobutanoate hydroxymethyltransferase from Sphingopyxis alaskensis (strain DSM 13593 / LMG 18877 / RB2256) (Sphingomonas alaskensis).